Here is a 176-residue protein sequence, read N- to C-terminus: Small ribosomal subunit protein uS5 (176 aa).

In terms of domain architecture, S5 DRBM spans 11-74; that stretch reads LSEVLVDVNR…QAAKKRMMKV (64 aa).

Belongs to the universal ribosomal protein uS5 family. Part of the 30S ribosomal subunit. Contacts proteins S4 and S8.

In terms of biological role, with S4 and S12 plays an important role in translational accuracy. Functionally, located at the back of the 30S subunit body where it stabilizes the conformation of the head with respect to the body. This Rickettsia africae (strain ESF-5) protein is Small ribosomal subunit protein uS5.